The following is a 2034-amino-acid chain: Host cell factor 1 (2034 aa).

Ala-2 bears the N-acetylalanine mark. Ser-6 carries the phosphoserine modification. Kelch repeat units lie at residues 44 to 89 (LIVV…GFVC), 93 to 140 (RLLV…RLGH), 148 to 194 (KCYL…ITYG), 217 to 265 (KLVI…TIGN), and 266 to 313 (KMYV…LMDT). Glycyl lysine isopeptide (Lys-Gly) (interchain with G-Cter in ubiquitin) cross-links involve residues Lys-105, Lys-163, and Lys-244. Residue Lys-282 forms a Glycyl lysine isopeptide (Lys-Gly) (interchain with G-Cter in SUMO2) linkage. Lys-288 is subject to N6-acetyllysine. Residue Lys-363 forms a Glycyl lysine isopeptide (Lys-Gly) (interchain with G-Cter in ubiquitin) linkage. In terms of domain architecture, Fibronectin type-III 1 spans 366–469 (PPARVQLVRA…TIQVLPTVPG (104 aa)). The disordered stretch occupies residues 407–434 (ATATSPTPNPVPSVPANPPKSPAPAAAA). The residue at position 411 (Ser-411) is a Phosphoserine. A compositionally biased stretch (pro residues) spans 413 to 428 (TPNPVPSVPANPPKSP). Positions 500–550 (LVTMRPASQAGKAPVTVTSLPASVRMVVPTQSAQGTVIGSNPQMSGMAALA) are required for interaction with OGT. Residues Arg-504 and Arg-524 each carry the omega-N-methylarginine modification. Phosphoserine is present on residues Ser-598, Ser-666, and Ser-669. Residues 610–722 (LKTAAAQVGT…KGPLPAGTIL (113 aa)) are interaction with SIN3A. Positions 750–902 (ILGISSVSPS…SLAGAGAHST (153 aa)) are interaction with ZBTB17. Lys-813 bears the N6-acetyllysine mark. An interaction with GABP2 region spans residues 813–912 (KIITAVPKIA…SASLATPITT (100 aa)). 3 HCF repeat repeats span residues 1010–1035 (TLVC…TVVA), 1072–1097 (VRVC…ATSN), and 1101–1126 (QHGC…AMSS). One copy of the HCF repeat 4; degenerate repeat lies at 1156–1182 (RAQGTVKPPCQTQQTNMTSTTMTVQAT). A phosphoserine mark is found at Ser-1204 and Ser-1223. Disordered stretches follow at residues 1221–1241 (GPSS…TYTT), 1302–1374 (PCET…TTST), 1444–1477 (TVTS…NITS), and 1491–1525 (RAVT…QLPP). HCF repeat repeat units lie at residues 1295–1320 (TQVC…SNAG) and 1323–1348 (QRVC…ATSN). The span at 1308 to 1321 (TGTTNTATTSNAGS) shows a compositional bias: low complexity. The stretch at 1358 to 1383 (QQPASGHPCETHQTTSTGTTMSVSVG) is one HCF repeat 7; degenerate repeat. The stretch at 1423-1448 (QRVCSNPPCETHETGTTHTATTVTSN) is one HCF repeat 8 repeat. Low complexity predominate over residues 1491–1501 (RAVTTVTQSTP). Thr-1500 carries the phosphothreonine modification. A compositionally biased stretch (pro residues) spans 1502 to 1511 (VPGPSVPPPE). Residues Ser-1506 and Ser-1516 each carry the phosphoserine modification. The stretch at 1693 to 1723 (IVLTQQELAALVQQQQQLQEAQAQAQQQHHL) forms a coiled coil. The residue at position 1782 (Ser-1782) is a Phosphoserine. 2 consecutive Fibronectin type-III domains span residues 1808 to 1899 (LPPP…TCLP) and 1901 to 2017 (FPGA…TSKD). Residues Lys-1818 and Lys-1819 each participate in a glycyl lysine isopeptide (Lys-Gly) (interchain with G-Cter in ubiquitin) cross-link. Ser-1849 bears the Phosphoserine mark. Residues 2005–2034 (ATQVRWLQETSKDSSGTKPASKRPMSSPEM) are disordered. An N6-acetyllysine modification is found at Lys-2016.

In terms of assembly, composed predominantly of six polypeptides ranging from 110 to 150 kDa and a minor 300 kDa polypeptide. The majority of N- and C-terminal cleavage products remain tightly, albeit non-covalently, associated. Interacts with POU2F1, CREB3, ZBTB17, EGR2, E2F4, CREBZF, SP1, GABP2, Sin3 HDAC complex (SIN3A, HDAC1, HDAC2, SUDS3), SAP30, SIN3B and FHL2. Component of a MLL1 complex, composed of at least the core components KMT2A/MLL1, ASH2L, HCFC1, WDR5 and RBBP5, as well as the facultative components BACC1, CHD8, DPY30, E2F6, HCFC2, HSP70, INO80C, KANSL1, LAS1L, MAX, MCRS1, MEN1, MGA, KAT8, PELP1, PHF20, PRP31, RING2, RUVBL1, RUVBL2, SENP3, TAF1, TAF4, TAF6, TAF7, TAF9 and TEX10. Component of a THAP1/THAP3-HCFC1-OGT complex that is required for the regulation of the transcriptional activity of RRM1. Interacts directly with THAP3 (via its HBM). Interacts (via the Kelch-repeat domain) with THAP1 (via the HBM); the interaction recruits HCHC1 to the RRM1. Interacts with THAP7 and THAP11 (via the HMB). Interacts directly with OGT; the interaction, which requires the HCFC1 cleavage site domain, glycosylates and promotes the proteolytic processing of HCFC1, retains OGT in the nucleus and impacts the expression of herpes simplex virus immediate early viral genes. Component of the SET1 complex, at least composed of the catalytic subunit (SETD1A or SETD1B), WDR5, WDR82, RBBP5, ASH2L, CXXC1, HCFC1 and DPY30. Component of the NSL complex at least composed of MOF/KAT8, KANSL1, KANSL2, KANSL3, MCRS1, PHF20, OGT1/OGT, WDR5 and HCFC1. Component of a complex at least composed of ZNF335, HCFC1, CCAR2, EMSY, MKI67, RBBP5, ASH2L and WDR5; the complex is formed as a result of interactions between components of a nuclear receptor-mediated transcription complex and a histone methylation complex. Within the complex interacts with ZNF335. Interacts with TET2 and TET3. Interacts with HCFC1R1. Interacts with THAP11. Interacts (via Kelch domain) with KMT2E/MLL5 isoform 3 (via HBM motif). Interacts with E2F1. Accessory scaffold component of the polycomb repressive deubiquitinase (PR-DUB) complex, at least composed of BAP1, one of ASXL1, ASXL2 or (probably) ASXL3 and one of MBD5 or MBD6; the PR-DUB core associates with a number of accessory proteins, including FOXK1, FOXK2, KDM1B, HCFC1, YY1 and OGT. Interacts with YY1 (via Gly-rich region); the interaction is direct. Interacts with BAP1 (via HBM-like motif). In terms of processing, proteolytically cleaved at one or several PPCE--THET sites within the HCF repeats. Further cleavage of the primary N- and C-terminal chains results in a 'trimming' and accumulation of the smaller chains. Cleavage is promoted by O-glycosylation. O-glycosylated. GlcNAcylation by OGT promotes proteolytic processing. Post-translationally, ubiquitinated. Lys-1818 and Lys-1819 are ubiquitinated both via 'Lys-48'- and 'Lys-63'-linked polyubiquitin chains. BAP1 mediated deubiquitination of 'Lys-48'-linked polyubiquitin chains; deubiquitination by BAP1 does not seem to stabilize the protein.

It is found in the cytoplasm. It localises to the nucleus. Transcriptional coregulator. Serves as a scaffold protein, bridging interactions between transcription factors, including THAP11 and ZNF143, and transcriptional coregulators. Involved in control of the cell cycle. Also antagonizes transactivation by ZBTB17 and GABP2; represses ZBTB17 activation of the p15(INK4b) promoter and inhibits its ability to recruit p300. Coactivator for EGR2 and GABP2. Tethers the chromatin modifying Set1/Ash2 histone H3 'Lys-4' methyltransferase (H3K4me) and Sin3 histone deacetylase (HDAC) complexes (involved in the activation and repression of transcription, respectively) together. Component of a THAP1/THAP3-HCFC1-OGT complex that is required for the regulation of the transcriptional activity of RRM1. As part of the NSL complex it may be involved in acetylation of nucleosomal histone H4 on several lysine residues. Recruits KMT2E/MLL5 to E2F1 responsive promoters promoting transcriptional activation and thereby facilitates G1 to S phase transition. Modulates expression of homeobox protein PDX1, perhaps acting in concert with transcription factor E2F1, thereby regulating pancreatic beta-cell growth and glucose-stimulated insulin secretion. May negatively modulate transcriptional activity of FOXO3. This Rattus norvegicus (Rat) protein is Host cell factor 1.